The following is a 57-amino-acid chain: Small polypeptide DEVIL 20 (57 aa).

N-linked (GlcNAc...) asparagine glycosylation is present at Asn-5. Positions 16-47 (TFKAKCSHMVRKQRAKFYILGRCLAMLVCGRG) are required for DVL/RTFL small polypeptide activity. The helical transmembrane segment at 29–45 (RAKFYILGRCLAMLVCG) threads the bilayer.

It belongs to the DVL/RTFL small polypeptides family.

It is found in the cell membrane. Functionally, small polypeptide acting as a regulatory molecule which coordinates cellular responses required for differentiation, growth and development, probably by restricting polar cell proliferation in lateral organs and coordinating socket cell recruitment and differentiation at trichome sites. The sequence is that of Small polypeptide DEVIL 20 from Arabidopsis thaliana (Mouse-ear cress).